An 85-amino-acid chain; its full sequence is Teretoxin Tan9.6 (85 aa).

The first 21 residues, 1 to 21 (MMSKTGALLLTFMILVLFSMA), serve as a signal peptide directing secretion. Residues 22-52 (AADALGERFEDHEQKIREQDAGVGLLSLMGR) constitute a propeptide that is removed on maturation.

In terms of processing, contains 3 disulfide bonds. In terms of tissue distribution, expressed by the venom duct.

It localises to the secreted. This chain is Teretoxin Tan9.6, found in Terebra anilis (Auger snail).